Reading from the N-terminus, the 295-residue chain is Ethanolamine ammonia-lyase small subunit (295 aa).

Positions 207, 228, and 258 each coordinate adenosylcob(III)alamin.

The protein belongs to the EutC family. As to quaternary structure, the basic unit is a heterodimer which dimerizes to form tetramers. The heterotetramers trimerize; 6 large subunits form a core ring with 6 small subunits projecting outwards. The cofactor is adenosylcob(III)alamin.

It localises to the bacterial microcompartment. The enzyme catalyses ethanolamine = acetaldehyde + NH4(+). It functions in the pathway amine and polyamine degradation; ethanolamine degradation. Functionally, catalyzes the deamination of various vicinal amino-alcohols to oxo compounds. Allows this organism to utilize ethanolamine as the sole source of nitrogen and carbon in the presence of external vitamin B12. The sequence is that of Ethanolamine ammonia-lyase small subunit from Escherichia fergusonii (strain ATCC 35469 / DSM 13698 / CCUG 18766 / IAM 14443 / JCM 21226 / LMG 7866 / NBRC 102419 / NCTC 12128 / CDC 0568-73).